The following is a 126-amino-acid chain: uncharacterized protein (126 aa).

This is an uncharacterized protein from Homo sapiens (Human).